The primary structure comprises 599 residues: Elongation factor 4 (599 aa).

One can recognise a tr-type G domain in the interval 2-184 (KHIRNFSIIA…RLVRDIPPPQ (183 aa)). GTP-binding positions include 14-19 (DHGKST) and 131-134 (NKID).

Belongs to the TRAFAC class translation factor GTPase superfamily. Classic translation factor GTPase family. LepA subfamily.

The protein resides in the cell inner membrane. It catalyses the reaction GTP + H2O = GDP + phosphate + H(+). Its function is as follows. Required for accurate and efficient protein synthesis under certain stress conditions. May act as a fidelity factor of the translation reaction, by catalyzing a one-codon backward translocation of tRNAs on improperly translocated ribosomes. Back-translocation proceeds from a post-translocation (POST) complex to a pre-translocation (PRE) complex, thus giving elongation factor G a second chance to translocate the tRNAs correctly. Binds to ribosomes in a GTP-dependent manner. In Yersinia enterocolitica serotype O:8 / biotype 1B (strain NCTC 13174 / 8081), this protein is Elongation factor 4.